Here is a 331-residue protein sequence, read N- to C-terminus: Large ribosomal subunit protein uL3 (331 aa).

This sequence belongs to the universal ribosomal protein uL3 family. As to quaternary structure, part of the 50S ribosomal subunit. Forms a cluster with proteins L14 and L24e.

In terms of biological role, one of the primary rRNA binding proteins, it binds directly near the 3'-end of the 23S rRNA, where it nucleates assembly of the 50S subunit. The polypeptide is Large ribosomal subunit protein uL3 (Archaeoglobus fulgidus (strain ATCC 49558 / DSM 4304 / JCM 9628 / NBRC 100126 / VC-16)).